Reading from the N-terminus, the 337-residue chain is UDP-3-O-acylglucosamine N-acyltransferase (337 aa).

The Proton acceptor role is filled by His238.

It belongs to the transferase hexapeptide repeat family. LpxD subfamily. As to quaternary structure, homotrimer.

It catalyses the reaction a UDP-3-O-[(3R)-3-hydroxyacyl]-alpha-D-glucosamine + a (3R)-hydroxyacyl-[ACP] = a UDP-2-N,3-O-bis[(3R)-3-hydroxyacyl]-alpha-D-glucosamine + holo-[ACP] + H(+). Its pathway is bacterial outer membrane biogenesis; LPS lipid A biosynthesis. Its function is as follows. Catalyzes the N-acylation of UDP-3-O-acylglucosamine using 3-hydroxyacyl-ACP as the acyl donor. Is involved in the biosynthesis of lipid A, a phosphorylated glycolipid that anchors the lipopolysaccharide to the outer membrane of the cell. The protein is UDP-3-O-acylglucosamine N-acyltransferase of Xanthomonas oryzae pv. oryzae (strain KACC10331 / KXO85).